A 212-amino-acid polypeptide reads, in one-letter code: Peptide methionine sulfoxide reductase MsrA (212 aa).

Cys-52 is a catalytic residue.

It belongs to the MsrA Met sulfoxide reductase family.

The catalysed reaction is L-methionyl-[protein] + [thioredoxin]-disulfide + H2O = L-methionyl-(S)-S-oxide-[protein] + [thioredoxin]-dithiol. It carries out the reaction [thioredoxin]-disulfide + L-methionine + H2O = L-methionine (S)-S-oxide + [thioredoxin]-dithiol. Functionally, has an important function as a repair enzyme for proteins that have been inactivated by oxidation. Catalyzes the reversible oxidation-reduction of methionine sulfoxide in proteins to methionine. This is Peptide methionine sulfoxide reductase MsrA from Shigella boydii serotype 18 (strain CDC 3083-94 / BS512).